Here is a 163-residue protein sequence, read N- to C-terminus: Phosphopantetheine adenylyltransferase (163 aa).

T9 lines the substrate pocket. Residues 9-10 (TF) and H17 contribute to the ATP site. Substrate contacts are provided by K41, L73, and R87. ATP is bound by residues 88–90 (GLR), E98, and 123–129 (YQFISGT).

It belongs to the bacterial CoaD family. As to quaternary structure, homohexamer. Requires Mg(2+) as cofactor.

Its subcellular location is the cytoplasm. It catalyses the reaction (R)-4'-phosphopantetheine + ATP + H(+) = 3'-dephospho-CoA + diphosphate. Its pathway is cofactor biosynthesis; coenzyme A biosynthesis; CoA from (R)-pantothenate: step 4/5. Functionally, reversibly transfers an adenylyl group from ATP to 4'-phosphopantetheine, yielding dephospho-CoA (dPCoA) and pyrophosphate. In Herminiimonas arsenicoxydans, this protein is Phosphopantetheine adenylyltransferase.